Consider the following 557-residue polypeptide: Urocanate hydratase (557 aa).

The tract at residues 1–20 is disordered; the sequence is MSNPRHNEREVRSPRGDELN. Residues 52–53, glutamine 130, 176–178, glutamate 196, arginine 201, 242–243, 263–267, 273–274, and tyrosine 322 contribute to the NAD(+) site; these read GG, GMG, NA, QTSAH, and YL. The active site involves cysteine 410. Glycine 492 is a binding site for NAD(+).

This sequence belongs to the urocanase family. Requires NAD(+) as cofactor.

The protein localises to the cytoplasm. The enzyme catalyses 4-imidazolone-5-propanoate = trans-urocanate + H2O. It participates in amino-acid degradation; L-histidine degradation into L-glutamate; N-formimidoyl-L-glutamate from L-histidine: step 2/3. Functionally, catalyzes the conversion of urocanate to 4-imidazolone-5-propionate. The chain is Urocanate hydratase from Brucella melitensis biotype 2 (strain ATCC 23457).